A 676-amino-acid chain; its full sequence is RNA helicase NPH-II (676 aa).

Residues 172 to 347 (FSAWISHRPV…VFLPNPAFIH (176 aa)) form the Helicase ATP-binding domain. 185-192 (GGTGVGKT) contacts ATP. Positions 296–299 (DEVH) match the DEXH box motif. One can recognise a Helicase C-terminal domain in the interval 366–535 (NPSSRMAYIE…NYILYANKFN (170 aa)).

The protein belongs to the DEAD box helicase family. DEAH subfamily. Monomer.

It localises to the virion. The enzyme catalyses ATP + H2O = ADP + phosphate + H(+). Functionally, NTP-dependent helicase that catalyzes unidirectional unwinding of 3'tailed duplex RNAs and plays an important role during transcription of early mRNAs, presumably by preventing R-loop formation behind the elongating RNA polymerase. Might also play a role in the export of newly synthesized mRNA chains out of the core into the cytoplasm. Required for replication and propagation of viral particles. This Homo sapiens (Human) protein is RNA helicase NPH-II (OPG084).